Here is a 454-residue protein sequence, read N- to C-terminus: Cell division cycle-associated 7-like protein (454 aa).

The short motif at 9 to 33 (IPKEVADIFNAPSDDEEFVGFRDDV) is the Integrase domain-binding motif 1 (IBM1) element. Ser-21 is subject to Phosphoserine. The Integrase domain-binding motif 2 (IBM2) motif lies at 65–91 (FTEELRRIFIEDTDSETEDFAGFTQSD). Thr-77 is modified (phosphothreonine). At Ser-79 the chain carries Phosphoserine. Residues Thr-81 and Thr-88 each carry the phosphothreonine modification. Disordered regions lie at residues 103-169 (VESD…LFSS) and 188-213 (QVIQ…SSDA). A phosphoserine mark is found at Ser-105, Ser-108, Ser-117, Ser-138, Ser-139, Ser-162, Ser-195, and Ser-197. The segment covering 117 to 126 (SEEEEDEEED) has biased composition (acidic residues). An MYC-binding region spans residues 213–235 (ALLKRTMNIKENKAMLAQLLAEL). Residues Lys-222 and Lys-225 each participate in a glycyl lysine isopeptide (Lys-Gly) (interchain with G-Cter in SUMO2) cross-link. Ser-261 carries the phosphoserine modification.

As to quaternary structure, interacts with MYC. Interacts (via IBM motifs) with PSIP1 (via IBD domain); phosphorylation increases its affinity for PSIP1. Phosphorylation increases its interaction with PSIP1. Ubiquitous. Overexpressed in medulloblastoma.

It localises to the cytoplasm. The protein resides in the nucleus. In terms of biological role, plays a role in transcriptional regulation as a repressor that inhibits monoamine oxidase A (MAOA) activity and gene expression by binding to the promoter. Plays an important oncogenic role in mediating the full transforming effect of MYC in medulloblastoma cells. Involved in apoptotic signaling pathways; May act downstream of P38-kinase and BCL-2, but upstream of CASP3/caspase-3 as well as CCND1/cyclin D1 and E2F1. The polypeptide is Cell division cycle-associated 7-like protein (CDCA7L) (Homo sapiens (Human)).